The chain runs to 232 residues: 7-cyano-7-deazaguanine synthase (232 aa).

Residue 7-17 participates in ATP binding; sequence CSGGLDSVSLA. 4 residues coordinate Zn(2+): C185, C193, C196, and C199.

Belongs to the QueC family. It depends on Zn(2+) as a cofactor.

It carries out the reaction 7-carboxy-7-deazaguanine + NH4(+) + ATP = 7-cyano-7-deazaguanine + ADP + phosphate + H2O + H(+). The protein operates within purine metabolism; 7-cyano-7-deazaguanine biosynthesis. Its function is as follows. Catalyzes the ATP-dependent conversion of 7-carboxy-7-deazaguanine (CDG) to 7-cyano-7-deazaguanine (preQ(0)). This is 7-cyano-7-deazaguanine synthase from Brucella anthropi (strain ATCC 49188 / DSM 6882 / CCUG 24695 / JCM 21032 / LMG 3331 / NBRC 15819 / NCTC 12168 / Alc 37) (Ochrobactrum anthropi).